Reading from the N-terminus, the 684-residue chain is Fidgetin-like protein 2 (684 aa).

The span at 27-41 (PEQHLDVSSTTSSPA) shows a compositional bias: polar residues. Disordered regions lie at residues 27–48 (PEQHLDVSSTTSSPAHKSELYS), 99–179 (PGAF…PHSS), and 292–403 (LDEE…SDPM). Over residues 160-179 (SNLSDSGYSGSSSCSGPHSS) the composition is skewed to low complexity. A431 contacts ATP.

Belongs to the AAA ATPase family. Requires Mg(2+) as cofactor. Highly expressed in vascular endothelial cells and neuronal cells.

It localises to the cytoplasm. Its subcellular location is the cell cortex. It catalyses the reaction ATP + H2O = ADP + phosphate + H(+). Microtubule-severing enzyme that negatively regulates cell migration and wound healing. In migrating cells, targets dynamic microtubules (MTs) at the leading edge and severs them, thereby suppressing motility. Negative regulator of axon regeneration that suppresses axonal growth by selectively severing dynamic MTs in the distal axon shaft and growth cone. Contributes to proper cell branching during endothelial and neuronal development. This is Fidgetin-like protein 2 (fignl2) from Danio rerio (Zebrafish).